Reading from the N-terminus, the 238-residue chain is Putative pectate lyase X (238 aa).

The signal sequence occupies residues Met-1–Ala-22. Ca(2+) is bound by residues Asp-153, Glu-188, and Asp-192.

Belongs to the polysaccharide lyase 1 family. The cofactor is Ca(2+).

It carries out the reaction Eliminative cleavage of (1-&gt;4)-alpha-D-galacturonan to give oligosaccharides with 4-deoxy-alpha-D-galact-4-enuronosyl groups at their non-reducing ends.. It participates in glycan metabolism; pectin degradation; 2-dehydro-3-deoxy-D-gluconate from pectin: step 2/5. Functionally, involved in maceration and soft-rotting of plant tissue. In Pectobacterium carotovorum (Erwinia carotovora), this protein is Putative pectate lyase X (PEL X).